The primary structure comprises 430 residues: Serine hydroxymethyltransferase 1 (430 aa).

Residues L132 and 136 to 138 (GHL) each bind (6S)-5,6,7,8-tetrahydrofolate. An N6-(pyridoxal phosphate)lysine modification is found at K241.

The protein belongs to the SHMT family. In terms of assembly, homodimer. Requires pyridoxal 5'-phosphate as cofactor.

It is found in the cytoplasm. It carries out the reaction (6R)-5,10-methylene-5,6,7,8-tetrahydrofolate + glycine + H2O = (6S)-5,6,7,8-tetrahydrofolate + L-serine. It functions in the pathway one-carbon metabolism; tetrahydrofolate interconversion. Its pathway is amino-acid biosynthesis; glycine biosynthesis; glycine from L-serine: step 1/1. In terms of biological role, catalyzes the reversible interconversion of serine and glycine with tetrahydrofolate (THF) serving as the one-carbon carrier. This reaction serves as the major source of one-carbon groups required for the biosynthesis of purines, thymidylate, methionine, and other important biomolecules. Also exhibits THF-independent aldolase activity toward beta-hydroxyamino acids, producing glycine and aldehydes, via a retro-aldol mechanism. The chain is Serine hydroxymethyltransferase 1 from Bordetella parapertussis (strain 12822 / ATCC BAA-587 / NCTC 13253).